The sequence spans 338 residues: Holliday junction branch migration complex subunit RuvB (338 aa).

A disordered region spans residues 1–22 (MIEADRLIHAEPQGPEERDEQI). Residues 4 to 187 (ADRLIHAEPQ…FGIPLRLEFY (184 aa)) form a large ATPase domain (RuvB-L) region. Residues Arg27, Gly68, Lys71, Thr72, Thr73, 134 to 136 (EDY), Arg177, Tyr187, and Arg224 contribute to the ATP site. Thr72 lines the Mg(2+) pocket. Residues 188–258 (NTKDLSSIVS…VADLALDMLD (71 aa)) form a small ATPAse domain (RuvB-S) region. A head domain (RuvB-H) region spans residues 261–338 (SEGFDYMDRK…RHFDIIQPEK (78 aa)). 3 residues coordinate DNA: Arg297, Arg316, and Arg321.

Belongs to the RuvB family. As to quaternary structure, homohexamer. Forms an RuvA(8)-RuvB(12)-Holliday junction (HJ) complex. HJ DNA is sandwiched between 2 RuvA tetramers; dsDNA enters through RuvA and exits via RuvB. An RuvB hexamer assembles on each DNA strand where it exits the tetramer. Each RuvB hexamer is contacted by two RuvA subunits (via domain III) on 2 adjacent RuvB subunits; this complex drives branch migration. In the full resolvosome a probable DNA-RuvA(4)-RuvB(12)-RuvC(2) complex forms which resolves the HJ.

It localises to the cytoplasm. The enzyme catalyses ATP + H2O = ADP + phosphate + H(+). Functionally, the RuvA-RuvB-RuvC complex processes Holliday junction (HJ) DNA during genetic recombination and DNA repair, while the RuvA-RuvB complex plays an important role in the rescue of blocked DNA replication forks via replication fork reversal (RFR). RuvA specifically binds to HJ cruciform DNA, conferring on it an open structure. The RuvB hexamer acts as an ATP-dependent pump, pulling dsDNA into and through the RuvAB complex. RuvB forms 2 homohexamers on either side of HJ DNA bound by 1 or 2 RuvA tetramers; 4 subunits per hexamer contact DNA at a time. Coordinated motions by a converter formed by DNA-disengaged RuvB subunits stimulates ATP hydrolysis and nucleotide exchange. Immobilization of the converter enables RuvB to convert the ATP-contained energy into a lever motion, pulling 2 nucleotides of DNA out of the RuvA tetramer per ATP hydrolyzed, thus driving DNA branch migration. The RuvB motors rotate together with the DNA substrate, which together with the progressing nucleotide cycle form the mechanistic basis for DNA recombination by continuous HJ branch migration. Branch migration allows RuvC to scan DNA until it finds its consensus sequence, where it cleaves and resolves cruciform DNA. This Shewanella sediminis (strain HAW-EB3) protein is Holliday junction branch migration complex subunit RuvB.